We begin with the raw amino-acid sequence, 453 residues long: Allantoinase (453 aa).

The Zn(2+) site is built by H59, H61, K146, H186, H242, and D315. K146 is subject to N6-carboxylysine.

This sequence belongs to the metallo-dependent hydrolases superfamily. Allantoinase family. Homotetramer. It depends on Zn(2+) as a cofactor. Carboxylation allows a single lysine to coordinate two zinc ions.

It carries out the reaction (S)-allantoin + H2O = allantoate + H(+). It participates in nitrogen metabolism; (S)-allantoin degradation; allantoate from (S)-allantoin: step 1/1. Its function is as follows. Catalyzes the conversion of allantoin (5-ureidohydantoin) to allantoic acid by hydrolytic cleavage of the five-member hydantoin ring. The sequence is that of Allantoinase from Salmonella choleraesuis (strain SC-B67).